We begin with the raw amino-acid sequence, 174 residues long: Ribosome maturation factor RimM (174 aa).

One can recognise a PRC barrel domain in the interval 97–171 (EGYYYDFDII…RMVIDPIPGL (75 aa)).

Belongs to the RimM family. As to quaternary structure, binds ribosomal protein uS19.

The protein localises to the cytoplasm. An accessory protein needed during the final step in the assembly of 30S ribosomal subunit, possibly for assembly of the head region. Essential for efficient processing of 16S rRNA. May be needed both before and after RbfA during the maturation of 16S rRNA. It has affinity for free ribosomal 30S subunits but not for 70S ribosomes. This Symbiobacterium thermophilum (strain DSM 24528 / JCM 14929 / IAM 14863 / T) protein is Ribosome maturation factor RimM.